The chain runs to 1142 residues: Zinc finger MYM-type protein 1 (1142 aa).

K25 participates in a covalent cross-link: Glycyl lysine isopeptide (Lys-Gly) (interchain with G-Cter in SUMO2). MYM-type zinc fingers lie at residues 110–148 (QLFCSIPCITEYISSASSPVPSKRTCSNCSKDILNPKDV), 160–203 (KTFC…QYEV), and 210–245 (HNLCSNACLSKFHSANNFIMNCCENCGTYCYTSSSL). K284 is covalently cross-linked (Glycyl lysine isopeptide (Lys-Gly) (interchain with G-Cter in SUMO2)). An MYM-type 4 zinc finger spans residues 300–331 (ELFCSINCFSAYSKAKMESSSVSVVSVVHDTS). Residues 385–396 (KSSPSEPSNAVA) are compositionally biased toward polar residues. Positions 385 to 413 (KSSPSEPSNAVASSSTEQPSVSPSSSVFS) are disordered. Positions 397-413 (SSSTEQPSVSPSSSVFS) are enriched in low complexity. The TTF-type zinc-finger motif lies at 452–538 (KSRSIKKSCC…YQFCDGAVSD (87 aa)).

Its subcellular location is the nucleus. This Homo sapiens (Human) protein is Zinc finger MYM-type protein 1 (ZMYM1).